A 126-amino-acid chain; its full sequence is uncharacterized protein (126 aa).

Positions 13 to 45 (VAPKAGREEEQPPPPAGLGCGARGEPGRGPLEH) are disordered.

The protein resides in the cytoplasm. It is found in the cytoskeleton. It localises to the cilium basal body. This is an uncharacterized protein from Homo sapiens (Human).